The chain runs to 437 residues: Chaperone SurA (437 aa).

An N-terminal signal peptide occupies residues 1–22 (MKNWKFPLISTLLLLLTINVHA). PpiC domains are found at residues 173 to 274 (TVQY…KIDD) and 283 to 383 (VTEV…EVLE).

It is found in the periplasm. It catalyses the reaction [protein]-peptidylproline (omega=180) = [protein]-peptidylproline (omega=0). In terms of biological role, chaperone involved in the correct folding and assembly of outer membrane proteins. Recognizes specific patterns of aromatic residues and the orientation of their side chains, which are found more frequently in integral outer membrane proteins. May act in both early periplasmic and late outer membrane-associated steps of protein maturation. This Aliivibrio fischeri (strain ATCC 700601 / ES114) (Vibrio fischeri) protein is Chaperone SurA.